Consider the following 613-residue polypeptide: Pentatricopeptide repeat-containing protein At2g02750 (613 aa).

PPR repeat units follow at residues 30–64 (NKFT…GFFV), 65–99 (DVFT…GIAS), 101–126 (NAAV…ARVS), 128–162 (SGMN…GFEM), 163–193 (EVYV…VPHK), 194–228 (SVVT…SSEE), 230–264 (NDVT…EFQF), 265–295 (ETMV…LKDT), 297–331 (NLIS…GLKP), 332–366 (DSAT…VMVP), 367–401 (SLKC…AAER), 402–432 (DIFV…FEPK), 435–469 (DPVF…KVEP), 470–500 (SLAT…MQEE), and 506–539 (STEH…PSSS). Positions 540 to 613 (VYSSLLGSCR…VKLPGLSLSG (74 aa)) are type E motif; degenerate.

Belongs to the PPR family. PCMP-E subfamily.

The protein is Pentatricopeptide repeat-containing protein At2g02750 (PCMP-E22) of Arabidopsis thaliana (Mouse-ear cress).